A 143-amino-acid polypeptide reads, in one-letter code: MAIERTFSIIKPDAVAKNHIGAIYNRFESAGLKIIASKMVQLSKEQAEGFYAEHSARPFFGALVSFMTSGPVMVQVLEGENAVLANREIMGATNPAEAARGTLRADYAASIDENAVHGSDAVESAAREIAYFFSADEVCPRTR.

Residues lysine 11, phenylalanine 59, arginine 87, threonine 93, arginine 104, and asparagine 114 each contribute to the ATP site. Histidine 117 serves as the catalytic Pros-phosphohistidine intermediate.

It belongs to the NDK family. As to quaternary structure, homotetramer. Requires Mg(2+) as cofactor.

The protein resides in the cytoplasm. The enzyme catalyses a 2'-deoxyribonucleoside 5'-diphosphate + ATP = a 2'-deoxyribonucleoside 5'-triphosphate + ADP. It catalyses the reaction a ribonucleoside 5'-diphosphate + ATP = a ribonucleoside 5'-triphosphate + ADP. Major role in the synthesis of nucleoside triphosphates other than ATP. The ATP gamma phosphate is transferred to the NDP beta phosphate via a ping-pong mechanism, using a phosphorylated active-site intermediate. In Shewanella frigidimarina (strain NCIMB 400), this protein is Nucleoside diphosphate kinase.